The chain runs to 410 residues: uncharacterized protein (410 aa).

Helical transmembrane passes span 27-47 (ILALFSGGFATFSILYCVQSI), 63-83 (SLALSAATITMSLGMLFTGPL), 97-117 (LFIAAMLTMICSMMTSWISIV), 118-138 (LLRALTGLALSGVVAVAMTYI), 145-165 (NSLSFCMGLYISGNTIGGFLG), 180-200 (ISLMVIGLFSFISSCFFLYFL), 228-248 (VLFFLFIIGFILMGSFVTIFN), 254-274 (LMLEPFFLCQSSIGLLSTIYL), 293-313 (NNILIVSLMLMIIGLFITQYN), 316-332 (FIIILGLIIFSGGFFAS), 355-375 (YLFFYYLGSSVFGTFGGFFWF), and 378-398 (QWLGISVFIITMLFFGVFLSF).

It belongs to the major facilitator superfamily.

It localises to the cell membrane. This is an uncharacterized protein from Buchnera aphidicola subsp. Acyrthosiphon pisum (strain APS) (Acyrthosiphon pisum symbiotic bacterium).